A 146-amino-acid chain; its full sequence is Stress enhanced protein 1, chloroplastic (146 aa).

The N-terminal 73 residues, 1-73 (MALSQVSASL…GNRAASVSIR (73 aa)), are a transit peptide targeting the chloroplast. 2 consecutive transmembrane segments (helical) span residues 84 to 104 (LDIW…TVEI) and 120 to 140 (LPTV…VFIF).

The protein belongs to the ELIP/psbS family.

It localises to the plastid. The protein resides in the chloroplast thylakoid membrane. In terms of biological role, may be involved in non-photochemical quenching, a process that maintains the balance between dissipation and utilization of light energy to minimize generation of oxidizing molecules, thereby protecting the plant against photo-oxidative damage. May play a photoprotective role in the thylakoid membrane in response to light stress. This chain is Stress enhanced protein 1, chloroplastic, found in Arabidopsis thaliana (Mouse-ear cress).